The chain runs to 316 residues: UDP-N-acetylenolpyruvoylglucosamine reductase (316 aa).

An FAD-binding PCMH-type domain is found at 27-225 (VGGKAERFYR…KTAINALLKK (199 aa)). R190 is an active-site residue. The active-site Proton donor is the S239. Residue E309 is part of the active site.

This sequence belongs to the MurB family. FAD is required as a cofactor.

It is found in the cytoplasm. The catalysed reaction is UDP-N-acetyl-alpha-D-muramate + NADP(+) = UDP-N-acetyl-3-O-(1-carboxyvinyl)-alpha-D-glucosamine + NADPH + H(+). It participates in cell wall biogenesis; peptidoglycan biosynthesis. In terms of biological role, cell wall formation. The chain is UDP-N-acetylenolpyruvoylglucosamine reductase from Coxiella burnetii (strain RSA 331 / Henzerling II).